Consider the following 388-residue polypeptide: Zinc finger CCCH domain-containing protein 47 (388 aa).

2 disordered regions span residues 1–130 (MADP…MAPL) and 144–282 (PLHE…TPSA). Composition is skewed to basic and acidic residues over residues 61-109 (AAND…KSEV) and 181-193 (PDNH…HLPR). Residues 260 to 274 (ASSSSSSSSAGQQGS) show a composition bias toward low complexity. C3H1-type zinc fingers lie at residues 321–348 (HHKI…HGEE) and 359–388 (GGGG…HGGV).

The polypeptide is Zinc finger CCCH domain-containing protein 47 (Oryza sativa subsp. japonica (Rice)).